The chain runs to 948 residues: Phosphoenolpyruvate carboxylase (948 aa).

Active-site residues include histidine 138 and lysine 610.

It belongs to the PEPCase type 1 family. The cofactor is Mg(2+).

It carries out the reaction oxaloacetate + phosphate = phosphoenolpyruvate + hydrogencarbonate. Its function is as follows. Forms oxaloacetate, a four-carbon dicarboxylic acid source for the tricarboxylic acid cycle. This is Phosphoenolpyruvate carboxylase from Streptococcus gordonii (strain Challis / ATCC 35105 / BCRC 15272 / CH1 / DL1 / V288).